The chain runs to 389 residues: tRNA-specific 2-thiouridylase MnmA (389 aa).

ATP contacts are provided by residues 35 to 42 (GMSGGVDS) and Met-61. The tract at residues 121-123 (NPD) is interaction with target base in tRNA. The Nucleophile role is filled by Cys-126. Cys-126 and Cys-223 form a disulfide bridge. Gly-151 serves as a coordination point for ATP. Positions 173-175 (KDQ) are interaction with tRNA. Cys-223 (cysteine persulfide intermediate) is an active-site residue. The interaction with tRNA stretch occupies residues 335-336 (RY).

This sequence belongs to the MnmA/TRMU family.

The protein resides in the cytoplasm. The enzyme catalyses S-sulfanyl-L-cysteinyl-[protein] + uridine(34) in tRNA + AH2 + ATP = 2-thiouridine(34) in tRNA + L-cysteinyl-[protein] + A + AMP + diphosphate + H(+). In terms of biological role, catalyzes the 2-thiolation of uridine at the wobble position (U34) of tRNA, leading to the formation of s(2)U34. The sequence is that of tRNA-specific 2-thiouridylase MnmA from Actinobacillus pleuropneumoniae serotype 3 (strain JL03).